Consider the following 190-residue polypeptide: Putative cyclic ADP-D-ribose synthase ThsB (190 aa).

This sequence belongs to the Thoeris B TIR-like family. As to quaternary structure, homodimer.

It is found in the cytoplasm. Activated upon phage infection. Functionally, TIR-like domain-containing component of the Thoeris antiviral defense system, composed of ThsA and ThsB. Expression of ThsA and ThsB in B.subtilis (strain BEST7003) confers resistance to phages SBSphiC, SBSphiJ and SPO1. Phage infection activates this protein, generating a signal molecule that in turn activates ThsA. Probably hydrolyzes NAD(+) to make a cyclic ADP-D-ribose (cADPR) signaling molecule; might make 3'cADPR. The polypeptide is Putative cyclic ADP-D-ribose synthase ThsB (Bacillus amyloliquefaciens (strain Y2) (Bacillus amyloliquefaciens subsp. plantarum (strain B9601-Y2))).